We begin with the raw amino-acid sequence, 1092 residues long: Isoleucine--tRNA ligase (1092 aa).

The 'HIGH' region motif lies at 53 to 63; the sequence is PFANGLPHYGH. The short motif at 613 to 617 is the 'KMSKS' region element; sequence KLSKR. K616 provides a ligand contact to ATP.

This sequence belongs to the class-I aminoacyl-tRNA synthetase family. IleS type 2 subfamily. In terms of assembly, monomer. It depends on Zn(2+) as a cofactor.

It localises to the cytoplasm. It carries out the reaction tRNA(Ile) + L-isoleucine + ATP = L-isoleucyl-tRNA(Ile) + AMP + diphosphate. Its function is as follows. Catalyzes the attachment of isoleucine to tRNA(Ile). As IleRS can inadvertently accommodate and process structurally similar amino acids such as valine, to avoid such errors it has two additional distinct tRNA(Ile)-dependent editing activities. One activity is designated as 'pretransfer' editing and involves the hydrolysis of activated Val-AMP. The other activity is designated 'posttransfer' editing and involves deacylation of mischarged Val-tRNA(Ile). The protein is Isoleucine--tRNA ligase of Rickettsia peacockii (strain Rustic).